The chain runs to 120 residues: Ribonuclease P protein component 2 (120 aa).

This sequence belongs to the eukaryotic/archaeal RNase P protein component 2 family. Consists of a catalytic RNA component and at least 4-5 protein subunits.

The protein resides in the cytoplasm. The enzyme catalyses Endonucleolytic cleavage of RNA, removing 5'-extranucleotides from tRNA precursor.. Its function is as follows. Part of ribonuclease P, a protein complex that generates mature tRNA molecules by cleaving their 5'-ends. The chain is Ribonuclease P protein component 2 from Thermococcus kodakarensis (strain ATCC BAA-918 / JCM 12380 / KOD1) (Pyrococcus kodakaraensis (strain KOD1)).